Consider the following 437-residue polypeptide: Mannan endo-1,4-beta-mannosidase A (437 aa).

An N-terminal signal peptide occupies residues 1 to 19; it reads MMMLSKSLLSAATAASALA. Residues 20–27 constitute a propeptide that is removed on maturation; the sequence is AVLQPVPR. Residues 28–376 form a catalytic region; the sequence is ASSFVTISGT…VDAINGGTTT (349 aa). C53 and C56 are disulfide-bonded. Residues N157 and N184 are each glycosylated (N-linked (GlcNAc...) asparagine). The active-site Proton donor/acceptor is E196. 196-198 is a substrate binding site; it reads EPR. C199 and C202 form a disulfide bridge. Residues E232 and W274 each coordinate substrate. N-linked (GlcNAc...) asparagine glycosylation is present at N277. C292 and C299 form a disulfide bridge. The active-site Nucleophile is the E303. A disulfide bridge links C311 with C361. An N-linked (GlcNAc...) asparagine glycan is attached at N355. The tract at residues 372 to 399 is disordered; sequence GGTTTPPPVSSTTTTSSRTSSTPPPPGG. A linker region spans residues 377–399; sequence PPPVSSTTTTSSRTSSTPPPPGG. Residues 381–392 show a composition bias toward low complexity; the sequence is SSTTTTSSRTSS. A CBM1 domain is found at 400 to 435; sequence SCSPLYGQCGGSGYTGPTCCAQGTCIYSNYWYSQCL.

The protein belongs to the glycosyl hydrolase 5 (cellulase A) family. As to quaternary structure, monomer.

It is found in the secreted. It carries out the reaction Random hydrolysis of (1-&gt;4)-beta-D-mannosidic linkages in mannans, galactomannans and glucomannans.. Its function is as follows. Endo-1,4-mannanase that catalyzes the random hydrolysis of (1-&gt;4)-beta-D-mannosidic linkages in mannans and heteromannans. It is a crucial enzyme for depolymerization of seed galactomannans and wood galactoglucomannans. Active against locust bean gum and ivory nut mannan, releasing mainly tri- and disaccharides. Also has transglycosylation activity. Transglycosylation of two mannotrioses into a mannohexaose is the major transglycosylation route. This is Mannan endo-1,4-beta-mannosidase A from Hypocrea jecorina (strain ATCC 56765 / BCRC 32924 / NRRL 11460 / Rut C-30) (Trichoderma reesei).